Consider the following 508-residue polypeptide: Putative adenosylhomocysteinase 3 (508 aa).

Residue Ser-4 is modified to Phosphoserine. Residues 24 to 81 (DQKQEFNKRPTKIGRRSLSRSISQSSTDSYSSAASYTDSSDDETSPRDKQQKNSKGSS) are disordered. The segment covering 32 to 41 (RPTKIGRRSL) has biased composition (basic residues). Residues 42–61 (SRSISQSSTDSYSSAASYTD) show a composition bias toward low complexity. Phosphoserine is present on residues Ser-46, Ser-49, Ser-52, and Ser-55. Thr-133, Asp-207, and Glu-232 together coordinate substrate. 233–235 (SVT) is an NAD(+) binding site. 2 residues coordinate substrate: Lys-262 and Asp-266. NAD(+) contacts are provided by residues Asn-267, 298 to 303 (GEVGKG), Glu-319, Asn-354, 375 to 377 (IGH), and Asn-422.

The protein belongs to the adenosylhomocysteinase family. In terms of assembly, homotetramer. Forms heteromultimers with AHCYL1 (via the C-terminal region). Interacts with ITPR1; with lower affinity than AHCYL1 and maybe via ITPR1. Interacts with SLC4A4. Interacts with ZCCHC4. The cofactor is NAD(+).

The protein localises to the cytoplasm. The protein resides in the microsome. The catalysed reaction is S-adenosyl-L-homocysteine + H2O = L-homocysteine + adenosine. The protein operates within amino-acid biosynthesis; L-homocysteine biosynthesis; L-homocysteine from S-adenosyl-L-homocysteine: step 1/1. May regulate the electrogenic sodium/bicarbonate cotransporter SLC4A4 activity and Mg(2+)-sensitivity. On the contrary of its homolog AHCYL1, does not regulate ITPR1 sensitivity to inositol 1,4,5-trisphosphate. The polypeptide is Putative adenosylhomocysteinase 3 (AHCYL2) (Pongo abelii (Sumatran orangutan)).